The sequence spans 367 residues: Putative F-box protein At3g21130 (367 aa).

An F-box domain is found at 4–50 (KRNTVYLSEDLIVEILSRVSAVSLARLRTTSKRWNALVKDERLAKKH).

This is Putative F-box protein At3g21130 from Arabidopsis thaliana (Mouse-ear cress).